A 901-amino-acid polypeptide reads, in one-letter code: Nuclear factor of activated T-cells, cytoplasmic 4 (901 aa).

Positions 1–11 are enriched in acidic residues; that stretch reads MGAASCEDEEL. 2 disordered regions span residues 1–180 and 203–361; these read MGAA…SSWS and NEAA…TEDS. Residues 61-81 are compositionally biased toward pro residues; that stretch reads IPRPPPPRPGMHSPPPRPAPS. Over residues 96-109 the composition is skewed to gly residues; it reads GGPGGTAGGTGGGR. Residues 114 to 119 are calcineurin-binding; sequence PSIRIT. Positions 114 to 123 are enriched in low complexity; that stretch reads PSIRITSISP. A compositionally biased stretch (gly residues) spans 151 to 165; it reads GFGGYREAGGQGGGA. Positions 166-180 are enriched in low complexity; it reads FFSPSPGSSSLSSWS. Phosphoserine is present on residues Ser-168, Ser-170, Ser-213, and Ser-217. Residues 213–229 form an SP 1 repeat; the sequence is SPLPSPRASPRPWTPED. A 2 approximate SP repeats region spans residues 213–293; sequence SPLPSPRASP…LSRRGSLGEE (81 aa). Pro residues-rich tracts occupy residues 215–227 and 254–263; these read LPSP…PWTP and GPIPASPRPA. A Nuclear localization signal motif is present at residues 268–270; it reads KRR. Low complexity predominate over residues 272 to 288; the sequence is SSSGTPSSASPALSRRG. An SP 2; approximate repeat occupies 277–293; sequence PSSASPALSRRGSLGEE. 3 positions are modified to phosphoserine: Ser-289, Ser-334, and Ser-344. The 182-residue stretch at 401-582 folds into the RHD domain; sequence SALPPLDWPL…VPIECSQRSA (182 aa). A DNA-binding region spans residues 430 to 437; that stretch reads RAHYETEG. Residues 586–683 enclose the IPT/TIG domain; the sequence is PQVEAYSPSA…KRSPTQSFKF (98 aa). The Nuclear localization signal motif lies at 672-674; the sequence is RRK. Residue Lys-689 forms a Glycyl lysine isopeptide (Lys-Gly) (interchain with G-Cter in SUMO2) linkage. Disordered stretches follow at residues 697 to 721 and 791 to 868; these read SLRG…PRPP and QYGG…GFRD. Over residues 805-822 the composition is skewed to pro residues; it reads FSPPAPFRPPLPSSPPLE.

As to quaternary structure, member of the multicomponent NFATC transcription complex that consists of at least two components, a pre-existing cytoplasmic component NFATC2 and an inducible nuclear component NFATC1. Other NFAT proteins, such as NFATC4, NFATC3, or members of the activating protein-1 (AP-1) family and MAF can also bind the complex. NFAT proteins can bind DNA as monomers or dimers. Component of a promoter-binding complex composed of STAT3, NFATC3 and NFATC4; complex formation is enhanced by calcineurin. Interacts with CREBBP; this interaction potentiates transcription activation. Interacts with MAPK8/JNK1 and MAPK9/JNK2. Interacts with GATA4 (via the second Zn finger). Interacts (via N-terminus) with IRAK1 (via C-terminus). Interacts with RPS6KA3. Interacts with HOMER1, HOMER2 and HOMER3; this interaction competes with calcineurin/PPP3CA-binding and hence prevents NFATC4 dephosphorylation and activation. Interacts with ESR1 and ESR2; this interaction decreases NFATC4 transcriptional activity. Interacts with MTOR and MAPK7/ERK5. Interacts with TRIM17; this interaction prevents NFATC3 nuclear localization. Interacts with TCF25 (via C-terminus); the interaction leads to suppression of NFATC4 transcription factor activity and is reduced following stimulation with angiotensin-2. In terms of processing, phosphorylated by NFATC-kinases; dephosphorylated by calcineurin/PPP3CA. Phosphorylated on Ser-168 and Ser-170 by MTOR, IRAK1, MAPK7/ERK5 and MAPK14/p38, on Ser-213 and Ser-217 by MAPK8 and MAPK9, and on Ser-289 and Ser-344 by RPS6KA3. Phosphorylated by GSK3B; this phosphorylation markedly increases NFATC4 ubiquitination. Phosphorylation by MAPK8/JNK1, MAPK9/JNK2 and RPS6KA3 may stimulate NFATC4 transcriptional activity. Phosphorylation at Ser-168 and Ser-170 is stimulated by UV irradiation. Post-translationally, ubiquitinated, leading to degradation by the proteasome. Ubiquitination may be stimulated by GSK3B-dependent phosphorylation. Polyubiquitin linkage mainly occurs through 'Lys-48'. In terms of tissue distribution, expressed in heart (at protein level).

The protein localises to the cytoplasm. It is found in the nucleus. Ca(2+)-regulated transcription factor that is involved in several processes, including the development and function of the immune, cardiovascular, musculoskeletal, and nervous systems. Involved in T-cell activation, stimulating the transcription of cytokine genes, including that of IL2 and IL4. Along with NFATC3, involved in embryonic heart development. Following JAK/STAT signaling activation and as part of a complex with NFATC3 and STAT3, binds to the alpha-beta E4 promoter region of CRYAB and activates transcription in cardiomyocytes. Involved in mitochondrial energy metabolism required for cardiac morphogenesis and function. Transactivates many genes involved in heart physiology. Along with GATA4, binds to and activates NPPB/BNP promoter. Activates NPPA/ANP/ANF and MYH7/beta-MHC transcription. Binds to and transactivates AGTR2 gene promoter. Involved in the regulation of adult hippocampal neurogenesis. Involved in BDNF-driven pro-survival signaling in hippocampal adult-born neurons. Involved in the formation of long-term spatial memory and long-term potentiation. In cochlear nucleus neurons, may play a role in deafferentation-induced apoptosis during a developmental critical period when auditory neurons depend on afferent input for survival. Binds to and activates the BACE1/Beta-secretase 1 promoter, hence may regulate the proteolytic processing of the amyloid precursor protein (APP). Plays a role in adipocyte differentiation. May be involved in myoblast differentiation into myotubes. Binds the consensus DNA sequence 5'-GGAAAAT-3'. In the presence of CREBBP, activates TNF transcription. Binds to PPARG gene promoter and regulates its activity. Binds to PPARG and REG3G gene promoters. This is Nuclear factor of activated T-cells, cytoplasmic 4 (Nfatc4) from Rattus norvegicus (Rat).